The chain runs to 1523 residues: uncharacterized protein (1523 aa).

The tract at residues 1–89 (MLPTSSNNEE…GSSNMNPYDR (89 aa)) is disordered. 993–1000 (SPFGCGKS) is a binding site for ATP. Polar residues-rich tracts occupy residues 1463-1476 (TSRQSKQQRANEYN) and 1485-1498 (QSNNDYGSQRSVTN). The interval 1463-1498 (TSRQSKQQRANEYNSQHKHVKRQSNNDYGSQRSVTN) is disordered.

The protein belongs to the DNA2/NAM7 helicase family.

This is an uncharacterized protein from Caenorhabditis elegans.